An 891-amino-acid chain; its full sequence is Mating-type protein A-alpha Z3 (891 aa).

Residues 111-189 constitute a DNA-binding region (homeobox; TALE-type); that stretch reads EWQENMPPVP…AARIRIGWTH (79 aa). Positions 331–360 are enriched in basic and acidic residues; sequence AAHEKRQQARREQRQAKNERDAAQMREEQR. 4 disordered regions span residues 331–592, 606–671, 779–812, and 836–861; these read AAHE…VNWD, YLDS…ASET, SILS…VEPS, and PKKD…SPDT. Acidic residues-rich tracts occupy residues 369 to 400 and 427 to 457; these read SSDD…SDSD and ADDE…EEDT. Low complexity-rich tracts occupy residues 542-559 and 612-650; these read PSKT…KSST and SSRP…SSVS. Positions 651-660 are enriched in polar residues; that stretch reads TCETVGTDSS. Residues 841–850 show a composition bias toward basic and acidic residues; that stretch reads RYAERAERRA.

Belongs to the TALE/M-ATYP homeobox family.

It is found in the nucleus. In terms of biological role, specifies A-alpha-3 mating-type. May regulate the expression of genes specific to the homokaryotic cell type. The protein is Mating-type protein A-alpha Z3 of Schizophyllum commune (Split gill fungus).